The primary structure comprises 541 residues: Propionyl-CoA carboxylase beta chain, mitochondrial (541 aa).

The transit peptide at 1–28 (MAAVIRIRAMAAGTRLRVLNCGLGTTIR) directs the protein to the mitochondrion. Residues 34 to 292 (PVSVNERIEN…SNQDPASIRE (259 aa)) form the CoA carboxyltransferase N-terminal domain. A carboxyltransferase region spans residues 34-535 (PVSVNERIEN…SKKVHRPWRK (502 aa)). The residue at position 73 (Ser-73) is a Phosphoserine. Position 101 is an N6-acetyllysine; alternate (Lys-101). Lys-101 is subject to N6-succinyllysine; alternate. Lys-250 carries the post-translational modification N6-succinyllysine. In terms of domain architecture, CoA carboxyltransferase C-terminal spans 296–535 (PSDRLVPELD…SKKVHRPWRK (240 aa)). An acyl-CoA binding region spans residues 327 to 360 (DEREFFEIMPNYAKNIVIGFARMNGRTVGIVGNQ). N6-acetyllysine; alternate is present on residues Lys-476 and Lys-491. N6-succinyllysine; alternate is present on residues Lys-476 and Lys-491.

The protein belongs to the AccD/PCCB family. In terms of assembly, the holoenzyme is a dodecamer composed of 6 PCCA/alpha subunits and 6 PCCB/beta subunits.

Its subcellular location is the mitochondrion matrix. The enzyme catalyses propanoyl-CoA + hydrogencarbonate + ATP = (S)-methylmalonyl-CoA + ADP + phosphate + H(+). It catalyses the reaction butanoyl-CoA + hydrogencarbonate + ATP = (2S)-ethylmalonyl-CoA + ADP + phosphate + H(+). It participates in metabolic intermediate metabolism; propanoyl-CoA degradation; succinyl-CoA from propanoyl-CoA: step 1/3. Its function is as follows. This is one of the 2 subunits of the biotin-dependent propionyl-CoA carboxylase (PCC), a mitochondrial enzyme involved in the catabolism of odd chain fatty acids, branched-chain amino acids isoleucine, threonine, methionine, and valine and other metabolites. Propionyl-CoA carboxylase catalyzes the carboxylation of propionyl-CoA/propanoyl-CoA to D-methylmalonyl-CoA/(S)-methylmalonyl-CoA. Within the holoenzyme, the alpha subunit catalyzes the ATP-dependent carboxylation of the biotin carried by the biotin carboxyl carrier (BCC) domain, while the beta subunit then transfers the carboxyl group from carboxylated biotin to propionyl-CoA. Propionyl-CoA carboxylase also significantly acts on butyryl-CoA/butanoyl-CoA, which is converted to ethylmalonyl-CoA/(2S)-ethylmalonyl-CoA. Other alternative minor substrates include (2E)-butenoyl-CoA/crotonoyl-CoA. The protein is Propionyl-CoA carboxylase beta chain, mitochondrial of Rattus norvegicus (Rat).